A 130-amino-acid polypeptide reads, in one-letter code: Bet1-like SNARE 1-2 (130 aa).

Residues 1-106 lie on the Cytoplasmic side of the membrane; the sequence is MNFRRENRAS…EKKSNRKSCK (106 aa). In terms of domain architecture, t-SNARE coiled-coil homology spans 33–95; it reads AHDERDNDEA…SGTINRFKLV (63 aa). A coiled-coil region spans residues 40–82; that stretch reads DEALENLQDRVSFLKRVTGDIHEEVENHNRLLDKVGNKMDSAR. The helical; Anchor for type IV membrane protein transmembrane segment at 107–122 threads the bilayer; sequence LIAYFVLLFLIMYYLI. Over 123–130 the chain is Vesicular; that stretch reads RLLNYIKG.

It belongs to the BET1 family.

Its subcellular location is the golgi apparatus membrane. The protein resides in the endoplasmic reticulum membrane. Its function is as follows. Required for vesicular transport from the ER to the Golgi complex. Functions as a SNARE associated with ER-derived vesicles. The polypeptide is Bet1-like SNARE 1-2 (BET12) (Arabidopsis thaliana (Mouse-ear cress)).